Consider the following 455-residue polypeptide: Fumarate hydratase class II (455 aa).

Residues 96 to 98, 122 to 125, 132 to 134, and Thr-180 contribute to the substrate site; these read SGT, HPND, and SSN. The active-site Proton donor/acceptor is the His-181. Ser-311 is an active-site residue. Substrate is bound by residues Ser-312 and 317 to 319; that span reads KVN.

This sequence belongs to the class-II fumarase/aspartase family. Fumarase subfamily. As to quaternary structure, homotetramer.

The protein localises to the cytoplasm. It carries out the reaction (S)-malate = fumarate + H2O. Its pathway is carbohydrate metabolism; tricarboxylic acid cycle; (S)-malate from fumarate: step 1/1. Its function is as follows. Involved in the TCA cycle. Catalyzes the stereospecific interconversion of fumarate to L-malate. This chain is Fumarate hydratase class II, found in Listeria monocytogenes serovar 1/2a (strain ATCC BAA-679 / EGD-e).